The primary structure comprises 888 residues: Glutamate receptor 3 (888 aa).

The N-terminal stretch at 1-22 (MGQSVLRAVFFLVLGLLGHSHG) is a signal peptide. The Extracellular portion of the chain corresponds to 23-546 (GFPNTISIGG…GVFSFLDPLA (524 aa)). N-linked (GlcNAc...) asparagine glycosylation is found at Asn57, Asn260, Asn374, Asn409, and Asn416. Cysteines 85 and 334 form a disulfide. 3 residues coordinate L-glutamate: Pro502, Thr504, and Arg509. The helical transmembrane segment at 547–567 (YEIWMCIVFAYIGVSVVLFLV) threads the bilayer. Residues 568-596 (SRFSPYEWHLEDNNEEPRDPQSPPDPPNE) lie on the Cytoplasmic side of the membrane. Residues 597–612 (FGIFNSLWFSLGAFMQ) constitute an intramembrane region (helical; Pore-forming). An intramembrane segment occupies 613 to 615 (QGC). The S-palmitoyl cysteine moiety is linked to residue Cys615. Topologically, residues 616 to 621 (DISPRS) are cytoplasmic. Residues 622–642 (LSGRIVGGVWWFFTLIIISSY) form a helical membrane-spanning segment. Over 643–817 (TANLAAFLTV…DKTSALSLSN (175 aa)) the chain is Extracellular. Residues Ser680, Thr681, and Glu731 each contribute to the L-glutamate site. A disulfide bond links Cys744 and Cys799. A helical membrane pass occupies residues 818-838 (VAGVFYILVGGLGLAMMVALI). Residues 839 to 888 (EFCYKSRAESKRMKLTKNTQNFKPAPATNTQNYATYREGYNVYGTESVKI) lie on the Cytoplasmic side of the membrane. A lipid anchor (S-palmitoyl cysteine) is attached at Cys841. Phosphotyrosine occurs at positions 871 and 881.

The protein belongs to the glutamate-gated ion channel (TC 1.A.10.1) family. GRIA3 subfamily. As to quaternary structure, homotetramer or heterotetramer of pore-forming glutamate receptor subunits. Tetramers may be formed by the dimerization of dimers. Interacts with PICK1, GRIP1 and GRIP2. Found in a complex with GRIA1, GRIA2, GRIA4, CNIH2, CNIH3, CACNG2, CACNG3, CACNG4, CACNG5, CACNG7 and CACNG8. Interacts with CACNG5. Found in a complex with GRIA1, GRIA2, GRIA4, DLG4, CACNG8 and CNIH2.

Its subcellular location is the cell membrane. It is found in the postsynaptic cell membrane. The protein localises to the postsynaptic density membrane. It carries out the reaction Ca(2+)(in) = Ca(2+)(out). Its function is as follows. Ionotropic glutamate receptor that functions as a ligand-gated cation channel, gated by L-glutamate and glutamatergic agonists such as alpha-amino-3-hydroxy-5-methyl-4-isoxazolepropionic acid (AMPA), quisqualic acid, and kainic acid. L-glutamate acts as an excitatory neurotransmitter at many synapses in the central nervous system and plays an important role in fast excitatory synaptic transmission by inducing long-term potentiation. Binding of the excitatory neurotransmitter L-glutamate induces a conformation change, leading to the opening of the cation channel, and thereby converts the chemical signal to an electrical impulse upon entry of calcium. The receptor then desensitizes rapidly and enters a transient inactive state, characterized by the presence of bound agonist. In the presence of CACNG8, shows resensitization which is characterized by a delayed accumulation of current flux upon continued application of glutamate. This is Glutamate receptor 3 from Rattus norvegicus (Rat).